Reading from the N-terminus, the 178-residue chain is Large ribosomal subunit protein uL6 (178 aa).

The protein belongs to the universal ribosomal protein uL6 family. Part of the 50S ribosomal subunit.

Functionally, this protein binds to the 23S rRNA, and is important in its secondary structure. It is located near the subunit interface in the base of the L7/L12 stalk, and near the tRNA binding site of the peptidyltransferase center. The protein is Large ribosomal subunit protein uL6 of Streptococcus sanguinis (strain SK36).